Reading from the N-terminus, the 746-residue chain is Probable ubiquitin carboxyl-terminal hydrolase MINDY-4 (746 aa).

Disordered stretches follow at residues Asp123–Glu179, Met198–Glu254, and Gly319–Met342. 2 stretches are compositionally biased toward polar residues: residues Tyr141 to Ser152 and Thr165 to Val174. Cys448 serves as the catalytic Nucleophile. Residue His666 is the Proton acceptor of the active site.

The protein belongs to the MINDY deubiquitinase family. FAM188 subfamily.

The enzyme catalyses Thiol-dependent hydrolysis of ester, thioester, amide, peptide and isopeptide bonds formed by the C-terminal Gly of ubiquitin (a 76-residue protein attached to proteins as an intracellular targeting signal).. Functionally, probable hydrolase that can remove 'Lys-48'-linked conjugated ubiquitin from proteins. The polypeptide is Probable ubiquitin carboxyl-terminal hydrolase MINDY-4 (mindy4) (Xenopus tropicalis (Western clawed frog)).